The chain runs to 121 residues: Small ribosomal subunit protein uS13 (121 aa).

The disordered stretch occupies residues 91 to 121; that stretch reads HRRGLPVRGQKTKNNARTRKGPVKTVANKKK.

This sequence belongs to the universal ribosomal protein uS13 family. As to quaternary structure, part of the 30S ribosomal subunit. Forms a loose heterodimer with protein S19. Forms two bridges to the 50S subunit in the 70S ribosome.

Located at the top of the head of the 30S subunit, it contacts several helices of the 16S rRNA. In the 70S ribosome it contacts the 23S rRNA (bridge B1a) and protein L5 of the 50S subunit (bridge B1b), connecting the 2 subunits; these bridges are implicated in subunit movement. Contacts the tRNAs in the A and P-sites. The polypeptide is Small ribosomal subunit protein uS13 (Staphylococcus saprophyticus subsp. saprophyticus (strain ATCC 15305 / DSM 20229 / NCIMB 8711 / NCTC 7292 / S-41)).